The following is a 644-amino-acid chain: 1-deoxy-D-xylulose-5-phosphate synthase (644 aa).

Residues His78 and 120-122 contribute to the thiamine diphosphate site; that span reads GHA. Asp149 is a binding site for Mg(2+). Thiamine diphosphate-binding positions include 150 to 151, Asn178, and Glu373; that span reads AA. Mg(2+) is bound at residue Asn178.

The protein belongs to the transketolase family. DXPS subfamily. In terms of assembly, homodimer. Mg(2+) serves as cofactor. Requires thiamine diphosphate as cofactor.

The catalysed reaction is D-glyceraldehyde 3-phosphate + pyruvate + H(+) = 1-deoxy-D-xylulose 5-phosphate + CO2. It participates in metabolic intermediate biosynthesis; 1-deoxy-D-xylulose 5-phosphate biosynthesis; 1-deoxy-D-xylulose 5-phosphate from D-glyceraldehyde 3-phosphate and pyruvate: step 1/1. Functionally, catalyzes the acyloin condensation reaction between C atoms 2 and 3 of pyruvate and glyceraldehyde 3-phosphate to yield 1-deoxy-D-xylulose-5-phosphate (DXP). This Chlamydia caviae (strain ATCC VR-813 / DSM 19441 / 03DC25 / GPIC) (Chlamydophila caviae) protein is 1-deoxy-D-xylulose-5-phosphate synthase.